Reading from the N-terminus, the 331-residue chain is Pyruvate dehydrogenase E1 component subunit beta (331 aa).

Thiamine diphosphate is bound at residue Glu60. K(+) is bound by residues Leu113, Ala161, Ile162, Asp164, and Asn166.

In terms of assembly, heterodimer of an alpha and a beta chain. Thiamine diphosphate serves as cofactor.

It localises to the plastid. The protein resides in the chloroplast. The catalysed reaction is N(6)-[(R)-lipoyl]-L-lysyl-[protein] + pyruvate + H(+) = N(6)-[(R)-S(8)-acetyldihydrolipoyl]-L-lysyl-[protein] + CO2. Functionally, the pyruvate dehydrogenase complex catalyzes the overall conversion of pyruvate to acetyl-CoA and CO(2). It contains multiple copies of three enzymatic components: pyruvate dehydrogenase (E1), dihydrolipoamide acetyltransferase (E2) and lipoamide dehydrogenase (E3). This is Pyruvate dehydrogenase E1 component subunit beta (pdhB) from Porphyra purpurea (Red seaweed).